The following is a 949-amino-acid chain: Inactive atromentin synthetase invA3 (949 aa).

The segment at 38–460 (RAVSQYPNHE…SGRIKDTVVV (423 aa)) is adenylation (A) domain. Residues 592 to 670 (ALSTETEKTL…NLAKYVDSLV (79 aa)) enclose the Carrier domain. Residues 597-667 (TEKTLAGIYA…VISNLAKYVD (71 aa)) are thiolation and peptide carrier (T) domain. The residue at position 629 (S629) is an O-(pantetheine 4'-phosphoryl)serine. Residues 693-934 (PIFMVHPGMA…YTLMDFDHVA (242 aa)) form a thioesterase (TE) domain region.

The protein belongs to the ATP-dependent AMP-binding enzyme family.

Functionally, inactive atromentin synthetase homolog. While the invA3 adenylation (A) domain is capable of adenylating 4-hydroxyphenylpyruvate (4-HPP), the invA3 enzyme is inactive because of its non-functional thioesterase (TE) domain. This is Inactive atromentin synthetase invA3 (invA3) from Paxillus involutus (Naked brimcap).